Consider the following 169-residue polypeptide: Nucleoside-triphosphatase THEP1 (169 aa).

ATP is bound by residues 11-18 and 100-107; these read GEPGVGKT and IIGIDEIG.

It belongs to the THEP1 NTPase family.

The catalysed reaction is a ribonucleoside 5'-triphosphate + H2O = a ribonucleoside 5'-diphosphate + phosphate + H(+). Functionally, has nucleotide phosphatase activity towards ATP, GTP, CTP, TTP and UTP. May hydrolyze nucleoside diphosphates with lower efficiency. The polypeptide is Nucleoside-triphosphatase THEP1 (Sulfurisphaera tokodaii (strain DSM 16993 / JCM 10545 / NBRC 100140 / 7) (Sulfolobus tokodaii)).